Consider the following 319-residue polypeptide: Acetyl-coenzyme A carboxylase carboxyl transferase subunit alpha (319 aa).

A CoA carboxyltransferase C-terminal domain is found at 35-296 (DLDKEIEQLE…KANLLRQLED (262 aa)).

This sequence belongs to the AccA family. Acetyl-CoA carboxylase is a heterohexamer composed of biotin carboxyl carrier protein (AccB), biotin carboxylase (AccC) and two subunits each of ACCase subunit alpha (AccA) and ACCase subunit beta (AccD).

It localises to the cytoplasm. The enzyme catalyses N(6)-carboxybiotinyl-L-lysyl-[protein] + acetyl-CoA = N(6)-biotinyl-L-lysyl-[protein] + malonyl-CoA. It participates in lipid metabolism; malonyl-CoA biosynthesis; malonyl-CoA from acetyl-CoA: step 1/1. Functionally, component of the acetyl coenzyme A carboxylase (ACC) complex. First, biotin carboxylase catalyzes the carboxylation of biotin on its carrier protein (BCCP) and then the CO(2) group is transferred by the carboxyltransferase to acetyl-CoA to form malonyl-CoA. The polypeptide is Acetyl-coenzyme A carboxylase carboxyl transferase subunit alpha (Vibrio campbellii (strain ATCC BAA-1116)).